A 331-amino-acid chain; its full sequence is MIDIDGSYGEGGGQIVRNAIALSAVTGKATSIKNIRKDRPNPGLSAQHVKAIGIAALLCDAKVEGIKIGSTNIAFFPQEIRGGKYTIDIGTAGSIALLLQCIMPIATYSNTNIKLEIKGGTDVSWAPSIDYLKNVTLSALSKMGYRCNIDILKRGYYPRGGGIVNAIIEPSHLVPDRFSEERGTIRGISHCSNLPEHVAQRQADKAKAILENAGHECSIETCRTDFTSTGSGITLYCGMKGSFVPGKRGTTAEKVGNDAATSLLDELLTPSSVDIHLADQLIPYLGLAEGGSFTVKEISPHTKTNIWVTEKFLDVKFKIEKRNDIVKISIQ.

Residues Gln100 and 276–280 (HLADQ) contribute to the ATP site. His301 acts as the Tele-AMP-histidine intermediate in catalysis.

This sequence belongs to the RNA 3'-terminal cyclase family. Type 1 subfamily.

The protein localises to the cytoplasm. It carries out the reaction a 3'-end 3'-phospho-ribonucleotide-RNA + ATP = a 3'-end 2',3'-cyclophospho-ribonucleotide-RNA + AMP + diphosphate. Its function is as follows. Catalyzes the conversion of 3'-phosphate to a 2',3'-cyclic phosphodiester at the end of RNA. The mechanism of action of the enzyme occurs in 3 steps: (A) adenylation of the enzyme by ATP; (B) transfer of adenylate to an RNA-N3'P to produce RNA-N3'PP5'A; (C) and attack of the adjacent 2'-hydroxyl on the 3'-phosphorus in the diester linkage to produce the cyclic end product. The biological role of this enzyme is unknown but it is likely to function in some aspects of cellular RNA processing. This Methanococcoides burtonii (strain DSM 6242 / NBRC 107633 / OCM 468 / ACE-M) protein is RNA 3'-terminal phosphate cyclase.